We begin with the raw amino-acid sequence, 103 residues long: Large ribosomal subunit protein bL21 (103 aa).

It belongs to the bacterial ribosomal protein bL21 family. In terms of assembly, part of the 50S ribosomal subunit. Contacts protein L20.

Its function is as follows. This protein binds to 23S rRNA in the presence of protein L20. The chain is Large ribosomal subunit protein bL21 from Thermobifida fusca (strain YX).